The primary structure comprises 426 residues: Phosphomethylpyrimidine synthase (426 aa).

Residues Asn65, Met94, Tyr123, His162, Ser184 to Gly186, Asp225 to Arg228, and Glu264 each bind substrate. His268 provides a ligand contact to Zn(2+). Tyr291 is a substrate binding site. His332 contributes to the Zn(2+) binding site. The [4Fe-4S] cluster site is built by Cys408, Cys411, and Cys415.

It belongs to the ThiC family. It depends on [4Fe-4S] cluster as a cofactor.

It carries out the reaction 5-amino-1-(5-phospho-beta-D-ribosyl)imidazole + S-adenosyl-L-methionine = 4-amino-2-methyl-5-(phosphooxymethyl)pyrimidine + CO + 5'-deoxyadenosine + formate + L-methionine + 3 H(+). It participates in cofactor biosynthesis; thiamine diphosphate biosynthesis. Its function is as follows. Catalyzes the synthesis of the hydroxymethylpyrimidine phosphate (HMP-P) moiety of thiamine from aminoimidazole ribotide (AIR) in a radical S-adenosyl-L-methionine (SAM)-dependent reaction. This chain is Phosphomethylpyrimidine synthase, found in Methanococcus maripaludis (strain C6 / ATCC BAA-1332).